Consider the following 117-residue polypeptide: Large ribosomal subunit protein bL20 (117 aa).

The protein belongs to the bacterial ribosomal protein bL20 family.

In terms of biological role, binds directly to 23S ribosomal RNA and is necessary for the in vitro assembly process of the 50S ribosomal subunit. It is not involved in the protein synthesizing functions of that subunit. This is Large ribosomal subunit protein bL20 from Campylobacter fetus subsp. fetus (strain 82-40).